Here is a 459-residue protein sequence, read N- to C-terminus: Chromosomal replication initiator protein DnaA (459 aa).

Residues 1–74 (MMEMPIDNLW…ANVVQSILGH (74 aa)) form a domain I, interacts with DnaA modulators region. The interval 74–117 (HPVEIYITVAKGEEFEEIGGGGEWELPTTNIINETPNQNRQPNT) is domain II. The domain III, AAA+ region stretch occupies residues 118–334 (ELNAKYVFSR…GALTRALAYI (217 aa)). 4 residues coordinate ATP: Gly-162, Gly-164, Lys-165, and Thr-166. Residues 335–459 (SIWGLPMTVA…IKMNSRSRKP (125 aa)) form a domain IV, binds dsDNA region.

Belongs to the DnaA family. Oligomerizes as a right-handed, spiral filament on DNA at oriC.

The protein localises to the cytoplasm. In terms of biological role, plays an essential role in the initiation and regulation of chromosomal replication. ATP-DnaA binds to the origin of replication (oriC) to initiate formation of the DNA replication initiation complex once per cell cycle. Binds the DnaA box (a 9 base pair repeat at the origin) and separates the double-stranded (ds)DNA. Forms a right-handed helical filament on oriC DNA; dsDNA binds to the exterior of the filament while single-stranded (ss)DNA is stabiized in the filament's interior. The ATP-DnaA-oriC complex binds and stabilizes one strand of the AT-rich DNA unwinding element (DUE), permitting loading of DNA polymerase. After initiation quickly degrades to an ADP-DnaA complex that is not apt for DNA replication. Binds acidic phospholipids. The chain is Chromosomal replication initiator protein DnaA from Nostoc sp. (strain PCC 7120 / SAG 25.82 / UTEX 2576).